The sequence spans 36 residues: Esculentin-2R (36 aa).

Cys-30 and Cys-36 form a disulfide bridge.

In terms of tissue distribution, expressed by the skin glands.

The protein resides in the secreted. Functionally, antimicrobial peptide. This chain is Esculentin-2R, found in Pelophylax ridibundus (Marsh frog).